A 690-amino-acid polypeptide reads, in one-letter code: Eukaryotic translation initiation factor 3 subunit B (690 aa).

Basic and acidic residues predominate over residues 1–11; the sequence is MAKKKSEEHSG. The disordered stretch occupies residues 1–36; that stretch reads MAKKKSEEHSGADANDSDYQEEPNFEDPPGFVDNIS. The segment covering 15 to 25 has biased composition (acidic residues); sequence NDSDYQEEPNF. An RRM domain is found at 57–141; that stretch reads SVVVVDNIPK…HTFAVNLFTD (85 aa). WD repeat units lie at residues 207–246, 293–331, 334–369, 442–484, and 530–575; these read TRER…KIQK, DGMS…LLDL, IKIP…TLME, EIRE…KPSL, and PDHF…IKRT. A coiled-coil region spans residues 595–645; that stretch reads EEKQKEIKKNLKKYYAAFEQKDRLRLTRASKELLEKRSQLRETFMEYRNKR.

This sequence belongs to the eIF-3 subunit B family. As to quaternary structure, component of the eukaryotic translation initiation factor 3 (eIF-3) complex. The eIF-3 complex interacts with pix. Interacts with mxt.

Its subcellular location is the cytoplasm. Functionally, RNA-binding component of the eukaryotic translation initiation factor 3 (eIF-3) complex, which is involved in protein synthesis of a specialized repertoire of mRNAs and, together with other initiation factors, stimulates binding of mRNA and methionyl-tRNAi to the 40S ribosome. The eIF-3 complex specifically targets and initiates translation of a subset of mRNAs involved in cell proliferation. This Drosophila erecta (Fruit fly) protein is Eukaryotic translation initiation factor 3 subunit B.